The following is a 161-amino-acid chain: Globin CTT-VIIB-5/CTT-VIIB-9 (161 aa).

The N-terminal stretch at 1-16 (MKFFAVLALCIVGAIA) is a signal peptide. The 144-residue stretch at 18 to 161 (PLTADEASLV…NTFAIVVPRL (144 aa)) folds into the Globin domain. Heme b is bound by residues histidine 76 and histidine 111.

The protein belongs to the globin family. Homodimer.

The sequence is that of Globin CTT-VIIB-5/CTT-VIIB-9 (CTT-7B5) from Chironomus thummi thummi (Midge).